A 267-amino-acid polypeptide reads, in one-letter code: Mannose-specific lectin 1 (267 aa).

A signal peptide spans 1-26 (MAKLLLFLLPAILGLLVPPRSWSAVA). Bulb-type lectin domains are found at residues 29 to 134 (TNYL…PSVP) and 148 to 255 (NNLL…PQAK). Residues 54-58 (QDDCN), Y62, W66, Q67, 173-177 (QGDCN), Y181, and 185-188 (YGWQ) contribute to the beta-D-mannose site. The short motif at 54-62 (QDDCNLVLY) is the Carbohydrate-binding motif 1 element. 2 cysteine pairs are disulfide-bonded: C57–C77 and C176–C198. The Carbohydrate-binding motif 2 motif lies at 173-181 (QGDCNLVLY).

Forms heterotetramer of 2 chains 1 and 2 chains 2 arranged as a dimer of chain 1 and chain 2 heterodimers.

Its subcellular location is the secreted. Functionally, mannose-specific lectin. Shows agglutinating activity towards erythrocytes from rabbit. The chain is Mannose-specific lectin 1 from Colocasia esculenta (Wild taro).